A 479-amino-acid chain; its full sequence is Proline--tRNA ligase (479 aa).

Belongs to the class-II aminoacyl-tRNA synthetase family. ProS type 3 subfamily. Homodimer.

The protein resides in the cytoplasm. It catalyses the reaction tRNA(Pro) + L-proline + ATP = L-prolyl-tRNA(Pro) + AMP + diphosphate. Catalyzes the attachment of proline to tRNA(Pro) in a two-step reaction: proline is first activated by ATP to form Pro-AMP and then transferred to the acceptor end of tRNA(Pro). This is Proline--tRNA ligase from Mesomycoplasma hyopneumoniae (strain 7448) (Mycoplasma hyopneumoniae).